Here is a 106-residue protein sequence, read N- to C-terminus: Circadian clock oscillator protein KaiB (106 aa).

The protein belongs to the KaiB family. As to quaternary structure, the KaiABC complex composition changes during the circadian cycle to control KaiC phosphorylation. Complexes KaiC(6), KaiA(2-4):KaiC(6), KaiB(6):KaiC(6) and KaiC(6):KaiB(6):KaiA(12) are among the most important forms, many form cooperatively. Undergoes a major conformational rearrangment; in the free state forms homotetramers as a dimer of dimers. When bound to the CI domain of KaiC switches to a monomeric thioredoxin-fold (KaiB(fs)). KaiB(fs) binds CikA, leading it to dephosphorylate phospho-RpaA.

In terms of biological role, key component of the KaiABC oscillator complex, which constitutes the main circadian regulator in cyanobacteria. Complex composition changes during the circadian cycle to control KaiC phosphorylation. KaiA stimulates KaiC autophosphorylation, while KaiB sequesters KaiA, leading to KaiC autodephosphorylation. Phospho-Ser-431 KaiC accumulation triggers binding of KaiB to form the KaiB(6):KaiC(6) complex, leading to changes in output regulators CikA and SasA. KaiB switches to a thioredoxin-like fold (KaiB(fs)) when bound to KaiC. KaiB(6):KaiC(6) formation exposes a site for KaiA binding that sequesters KaiA from KaiC, making the KaiC(6):KaiB(6):KaiA(12) complex that results in KaiC autodephosphorylation. Its function is as follows. A metamorphic protein which reversibly switches between an inactive tetrameric fold and a rare, thioredoxin-like monomeric fold (KaiB(fs)). KaiB(fs) binds phospho-KaiC, KaiA and CikA. KaiA and CikA compete for binding to KaiB(fs), and KaiB(fs) and SasA compete for binding to KaiC, thus the clock oscillator and output signal pathway are tightly coupled. The polypeptide is Circadian clock oscillator protein KaiB (Gloeothece citriformis (strain PCC 7424) (Cyanothece sp. (strain PCC 7424))).